A 385-amino-acid polypeptide reads, in one-letter code: Mannitol-1-phosphate 5-dehydrogenase (385 aa).

4–15 provides a ligand contact to NAD(+); it reads AVHFGAGNIGRG.

The protein belongs to the mannitol dehydrogenase family.

It catalyses the reaction D-mannitol 1-phosphate + NAD(+) = beta-D-fructose 6-phosphate + NADH + H(+). The polypeptide is Mannitol-1-phosphate 5-dehydrogenase (Lactococcus lactis subsp. lactis (strain IL1403) (Streptococcus lactis)).